The chain runs to 327 residues: FERM domain-containing protein 6 (327 aa).

The FERM domain maps to 16 to 320 (RRVCIFLPND…NSHRLYMNLQ (305 aa)).

The protein localises to the cytoplasm. It is found in the cell membrane. The polypeptide is FERM domain-containing protein 6 (Frmd6) (Rattus norvegicus (Rat)).